Reading from the N-terminus, the 466-residue chain is A-type ATP synthase subunit B (466 aa).

Belongs to the ATPase alpha/beta chains family. In terms of assembly, has multiple subunits with at least A(3), B(3), C, D, E, F, H, I and proteolipid K(x).

The protein localises to the cell membrane. In terms of biological role, component of the A-type ATP synthase that produces ATP from ADP in the presence of a proton gradient across the membrane. The B chain is a regulatory subunit. The polypeptide is A-type ATP synthase subunit B (Sulfolobus acidocaldarius (strain ATCC 33909 / DSM 639 / JCM 8929 / NBRC 15157 / NCIMB 11770)).